Here is a 300-residue protein sequence, read N- to C-terminus: Mitochondrial carnitine/acylcarnitine carrier-like protein (300 aa).

Solcar repeat units lie at residues 2–93, 102–201, and 211–298; these read ADAW…MEGL, LTIS…FKRF, and LGQG…TRSS. 6 helical membrane-spanning segments follow: residues 8-28, 64-84, 108-128, 176-195, 211-231, and 273-292; these read LASG…FDTI, GLYK…AVLF, FVAG…TELI, GLFP…FAAY, LGQG…WGIV, and GFGP…FLAY.

Belongs to the mitochondrial carrier (TC 2.A.29) family. In terms of tissue distribution, high expression in cotyledons, leaves, flowers and developing siliques. Lower expression in roots and maturing siliques. Not detected in meristematic tissues.

The protein resides in the mitochondrion inner membrane. Functionally, involved in photorespiratory metabolism. Acts probably as a carrier for a glycine decarboxylase (GDC) cofactor or, alternatively, may act as a mitochondrial glycine shuttle. Involved in the transition from the embryonic stage to the juvenile autotrophic stage. This is Mitochondrial carnitine/acylcarnitine carrier-like protein (BOU) from Arabidopsis thaliana (Mouse-ear cress).